We begin with the raw amino-acid sequence, 177 residues long: ADP-ribosylation factor-like protein 3 (177 aa).

Gly2 carries the N-myristoyl glycine lipid modification. GTP contacts are provided by residues 23 to 31 (GLDNAGKTT), 125 to 128 (NKQD), and Ala159.

It belongs to the small GTPase superfamily. Arf family.

The protein localises to the golgi apparatus membrane. It localises to the cytoplasm. It is found in the cytoskeleton. Its subcellular location is the spindle. The protein resides in the nucleus. The protein localises to the microtubule organizing center. Functionally, small GTP-binding protein which cycles between an inactive GDP-bound and an active GTP-bound form, and the rate of cycling is regulated by guanine nucleotide exchange factors (GEF) and GTPase-activating proteins (GAP). Required for normal cytokinesis and cilia signaling. Required for targeting proteins to the ciliary membrane by releasing myristoylated protein from unc119 cargo adapters into the cilium. The chain is ADP-ribosylation factor-like protein 3 from Chlamydomonas reinhardtii (Chlamydomonas smithii).